The chain runs to 375 residues: Delta(12) fatty acid dehydrogenase (375 aa).

The next 2 helical transmembrane spans lie at 54-74 (IIAY…PAPL) and 77-97 (LAWP…WVIG). The Histidine box-1 signature appears at 98 to 102 (HECGH). A helical transmembrane segment spans residues 110–130 (WVDDTVGFILHSFLMTPYFSW). Positions 134–138 (HRNHH) match the Histidine box-2 motif. The next 3 helical transmembrane spans lie at 172–192 (LLIM…TNIS), 218–238 (VLLS…AVAA), and 242–262 (AWVT…FDII). The Histidine box-3 motif lies at 308 to 312 (HVMHH).

The protein belongs to the fatty acid desaturase type 1 family. Requires Fe cation as cofactor. As to expression, seed.

The protein resides in the membrane. It catalyses the reaction a (9Z,12Z)-octadecadienoyl-containing glycerolipid + 2 Fe(II)-[cytochrome b5] + O2 + 2 H(+) = a (9Z)-octadec-9-en-12-ynoyl-containing glycerolipid + 2 Fe(III)-[cytochrome b5] + 2 H2O. The protein operates within lipid metabolism; polyunsaturated fatty acid biosynthesis. Its function is as follows. Changes the delta-12 double bond of linoleic acid into a triple bond in the biosynthesis of crepenynic acid. The protein is Delta(12) fatty acid dehydrogenase of Crepis alpina (Hawksbeard).